Consider the following 252-residue polypeptide: Trans-aconitate 2-methyltransferase (252 aa).

Belongs to the methyltransferase superfamily. Tam family.

The protein localises to the cytoplasm. The catalysed reaction is trans-aconitate + S-adenosyl-L-methionine = (E)-3-(methoxycarbonyl)pent-2-enedioate + S-adenosyl-L-homocysteine. Its function is as follows. Catalyzes the S-adenosylmethionine monomethyl esterification of trans-aconitate. This chain is Trans-aconitate 2-methyltransferase, found in Escherichia coli O17:K52:H18 (strain UMN026 / ExPEC).